Here is a 1424-residue protein sequence, read N- to C-terminus: DNA-directed RNA polymerase subunit beta' (1424 aa).

Zn(2+)-binding residues include Cys-60, Cys-62, Cys-75, and Cys-78. Mg(2+) contacts are provided by Asp-449, Asp-451, and Asp-453. Residues Cys-783, Cys-857, Cys-864, and Cys-867 each contribute to the Zn(2+) site.

The protein belongs to the RNA polymerase beta' chain family. The RNAP catalytic core consists of 2 alpha, 1 beta, 1 beta' and 1 omega subunit. When a sigma factor is associated with the core the holoenzyme is formed, which can initiate transcription. Mg(2+) is required as a cofactor. Zn(2+) serves as cofactor.

It carries out the reaction RNA(n) + a ribonucleoside 5'-triphosphate = RNA(n+1) + diphosphate. Functionally, DNA-dependent RNA polymerase catalyzes the transcription of DNA into RNA using the four ribonucleoside triphosphates as substrates. The polypeptide is DNA-directed RNA polymerase subunit beta' (Treponema denticola (strain ATCC 35405 / DSM 14222 / CIP 103919 / JCM 8153 / KCTC 15104)).